We begin with the raw amino-acid sequence, 265 residues long: Adenosylcobinamide-GDP ribazoletransferase (265 aa).

7 consecutive transmembrane segments (helical) span residues 40 to 60, 67 to 87, 121 to 141, 150 to 170, 191 to 211, 213 to 233, and 243 to 263; these read IAYA…VVLV, LPAF…TGAF, GGCA…ALVA, LALV…LLAL, LACA…GFGI, TAFA…RLSG, and VAGA…LIFP.

It belongs to the CobS family. Mg(2+) is required as a cofactor.

It is found in the cell inner membrane. The enzyme catalyses alpha-ribazole + adenosylcob(III)inamide-GDP = adenosylcob(III)alamin + GMP + H(+). It catalyses the reaction alpha-ribazole 5'-phosphate + adenosylcob(III)inamide-GDP = adenosylcob(III)alamin 5'-phosphate + GMP + H(+). Its pathway is cofactor biosynthesis; adenosylcobalamin biosynthesis; adenosylcobalamin from cob(II)yrinate a,c-diamide: step 7/7. In terms of biological role, joins adenosylcobinamide-GDP and alpha-ribazole to generate adenosylcobalamin (Ado-cobalamin). Also synthesizes adenosylcobalamin 5'-phosphate from adenosylcobinamide-GDP and alpha-ribazole 5'-phosphate. This chain is Adenosylcobinamide-GDP ribazoletransferase, found in Xanthobacter autotrophicus (strain ATCC BAA-1158 / Py2).